We begin with the raw amino-acid sequence, 418 residues long: UDP-N-acetylglucosamine 1-carboxyvinyltransferase (418 aa).

A phosphoenolpyruvate-binding site is contributed by 22–23; sequence KN. R92 is a UDP-N-acetyl-alpha-D-glucosamine binding site. The Proton donor role is filled by C116. C116 is modified (2-(S-cysteinyl)pyruvic acid O-phosphothioketal). UDP-N-acetyl-alpha-D-glucosamine contacts are provided by residues 121-125, D305, and L327; that span reads RPIDL.

The protein belongs to the EPSP synthase family. MurA subfamily.

The protein resides in the cytoplasm. The catalysed reaction is phosphoenolpyruvate + UDP-N-acetyl-alpha-D-glucosamine = UDP-N-acetyl-3-O-(1-carboxyvinyl)-alpha-D-glucosamine + phosphate. Its pathway is cell wall biogenesis; peptidoglycan biosynthesis. Cell wall formation. Adds enolpyruvyl to UDP-N-acetylglucosamine. This is UDP-N-acetylglucosamine 1-carboxyvinyltransferase from Campylobacter jejuni (strain RM1221).